Consider the following 419-residue polypeptide: Serine hydroxymethyltransferase (419 aa).

Residues leucine 121 and 125–127 (GHL) contribute to the (6S)-5,6,7,8-tetrahydrofolate site. The residue at position 229 (lysine 229) is an N6-(pyridoxal phosphate)lysine. Position 354–356 (354–356 (SPF)) interacts with (6S)-5,6,7,8-tetrahydrofolate.

It belongs to the SHMT family. Homodimer. Pyridoxal 5'-phosphate serves as cofactor.

It is found in the cytoplasm. It catalyses the reaction (6R)-5,10-methylene-5,6,7,8-tetrahydrofolate + glycine + H2O = (6S)-5,6,7,8-tetrahydrofolate + L-serine. It participates in one-carbon metabolism; tetrahydrofolate interconversion. It functions in the pathway amino-acid biosynthesis; glycine biosynthesis; glycine from L-serine: step 1/1. Its function is as follows. Catalyzes the reversible interconversion of serine and glycine with tetrahydrofolate (THF) serving as the one-carbon carrier. This reaction serves as the major source of one-carbon groups required for the biosynthesis of purines, thymidylate, methionine, and other important biomolecules. Also exhibits THF-independent aldolase activity toward beta-hydroxyamino acids, producing glycine and aldehydes, via a retro-aldol mechanism. The chain is Serine hydroxymethyltransferase from Coxiella burnetii (strain CbuK_Q154) (Coxiella burnetii (strain Q154)).